Reading from the N-terminus, the 216-residue chain is Large ribosomal subunit protein uL3 (216 aa).

A disordered region spans residues 132–155; that stretch reads QDASHGNSRSHRVPGSIGQNQTPG. Residue Q152 is modified to N5-methylglutamine.

The protein belongs to the universal ribosomal protein uL3 family. As to quaternary structure, part of the 50S ribosomal subunit. Forms a cluster with proteins L14 and L19. In terms of processing, methylated by PrmB.

Functionally, one of the primary rRNA binding proteins, it binds directly near the 3'-end of the 23S rRNA, where it nucleates assembly of the 50S subunit. This chain is Large ribosomal subunit protein uL3, found in Legionella pneumophila (strain Paris).